The sequence spans 181 residues: Large ribosomal subunit protein uL5 (181 aa).

The protein belongs to the universal ribosomal protein uL5 family. In terms of assembly, part of the 50S ribosomal subunit; part of the 5S rRNA/L5/L18/L25 subcomplex. Contacts the 5S rRNA and the P site tRNA. Forms a bridge to the 30S subunit in the 70S ribosome.

Functionally, this is one of the proteins that bind and probably mediate the attachment of the 5S RNA into the large ribosomal subunit, where it forms part of the central protuberance. In the 70S ribosome it contacts protein S13 of the 30S subunit (bridge B1b), connecting the 2 subunits; this bridge is implicated in subunit movement. Contacts the P site tRNA; the 5S rRNA and some of its associated proteins might help stabilize positioning of ribosome-bound tRNAs. This is Large ribosomal subunit protein uL5 from Helicobacter acinonychis (strain Sheeba).